A 341-amino-acid chain; its full sequence is Eukaryotic translation initiation factor 3 subunit I (341 aa).

WD repeat units lie at residues 8 to 49 (GHER…GTYR), 50 to 91 (GHQG…KTWD), 135 to 184 (QSDE…LLYN), 189 to 228 (ELNQ…VLKS), and 286 to 325 (GHFG…YDFL).

It belongs to the eIF-3 subunit I family. Component of the eukaryotic translation initiation factor 3 (eIF-3) complex.

It localises to the cytoplasm. In terms of biological role, component of the eukaryotic translation initiation factor 3 (eIF-3) complex, which is involved in protein synthesis of a specialized repertoire of mRNAs and, together with other initiation factors, stimulates binding of mRNA and methionyl-tRNAi to the 40S ribosome. The eIF-3 complex specifically targets and initiates translation of a subset of mRNAs involved in cell proliferation. This is Eukaryotic translation initiation factor 3 subunit I from Chaetomium globosum (strain ATCC 6205 / CBS 148.51 / DSM 1962 / NBRC 6347 / NRRL 1970) (Soil fungus).